We begin with the raw amino-acid sequence, 510 residues long: D-alanine--D-alanyl carrier protein ligase (510 aa).

157-158 (TS) provides a ligand contact to ATP. D202 is a D-alanine binding site. Residue 297–302 (NTYGPT) participates in ATP binding. V306 contacts D-alanine. ATP is bound by residues D389 and K498. K498 is a D-alanine binding site.

It belongs to the ATP-dependent AMP-binding enzyme family. DltA subfamily.

The protein resides in the cytoplasm. The enzyme catalyses holo-[D-alanyl-carrier protein] + D-alanine + ATP = D-alanyl-[D-alanyl-carrier protein] + AMP + diphosphate. It functions in the pathway cell wall biogenesis; lipoteichoic acid biosynthesis. Its function is as follows. Catalyzes the first step in the D-alanylation of lipoteichoic acid (LTA), the activation of D-alanine and its transfer onto the D-alanyl carrier protein (Dcp) DltC. In an ATP-dependent two-step reaction, forms a high energy D-alanyl-AMP intermediate, followed by transfer of the D-alanyl residue as a thiol ester to the phosphopantheinyl prosthetic group of the Dcp. D-alanylation of LTA plays an important role in modulating the properties of the cell wall in Gram-positive bacteria, influencing the net charge of the cell wall. The chain is D-alanine--D-alanyl carrier protein ligase from Listeria monocytogenes serotype 4b (strain F2365).